The sequence spans 409 residues: SPI-1 type 3 secretion system translocon protein SctB (409 aa).

The chain crosses the membrane as a helical span at residues 119–140; that stretch reads ISGMSSSAVALLAAANTLMLTL. Over residues 350 to 368 the composition is skewed to polar residues; it reads ERSEQQISQVNNRVASTAS. Residues 350–378 are disordered; the sequence is ERSEQQISQVNNRVASTASDEARESSRKS.

The protein belongs to the SctB/SipC family. The core secretion machinery of the T3SS is composed of approximately 20 different proteins, including cytoplasmic components, a base, an export apparatus and a needle. This subunit is involved in the formation of a pore, called the translocon, in host membrane.

It is found in the secreted. The protein resides in the host membrane. Component of the type III secretion system 1 (SPI-1 T3SS), also called injectisome, which is used to inject bacterial effector proteins into eukaryotic host cells. SipB/SctE1 and SipC/SctB1 are inserted into the host membrane where they form a pore and allow the translocation of effector proteins into the cytosol of target cells. The polypeptide is SPI-1 type 3 secretion system translocon protein SctB (Salmonella typhi).